Reading from the N-terminus, the 286-residue chain is Elongation factor Ts (286 aa).

An involved in Mg(2+) ion dislocation from EF-Tu region spans residues 82-85; the sequence is TDFV.

The protein belongs to the EF-Ts family.

The protein resides in the cytoplasm. Functionally, associates with the EF-Tu.GDP complex and induces the exchange of GDP to GTP. It remains bound to the aminoacyl-tRNA.EF-Tu.GTP complex up to the GTP hydrolysis stage on the ribosome. This Desulfovibrio desulfuricans (strain ATCC 27774 / DSM 6949 / MB) protein is Elongation factor Ts.